The primary structure comprises 175 residues: Large ribosomal subunit protein uL10 (175 aa).

It belongs to the universal ribosomal protein uL10 family. In terms of assembly, part of the ribosomal stalk of the 50S ribosomal subunit. The N-terminus interacts with L11 and the large rRNA to form the base of the stalk. The C-terminus forms an elongated spine to which L12 dimers bind in a sequential fashion forming a multimeric L10(L12)X complex.

Functionally, forms part of the ribosomal stalk, playing a central role in the interaction of the ribosome with GTP-bound translation factors. The polypeptide is Large ribosomal subunit protein uL10 (Delftia acidovorans (strain DSM 14801 / SPH-1)).